We begin with the raw amino-acid sequence, 191 residues long: Molybdenum cofactor guanylyltransferase (191 aa).

GTP is bound by residues 13 to 15, K26, D72, and D102; that span reads LAG. D102 lines the Mg(2+) pocket.

The protein belongs to the MobA family. As to quaternary structure, monomer. Requires Mg(2+) as cofactor.

The protein resides in the cytoplasm. The catalysed reaction is Mo-molybdopterin + GTP + H(+) = Mo-molybdopterin guanine dinucleotide + diphosphate. Transfers a GMP moiety from GTP to Mo-molybdopterin (Mo-MPT) cofactor (Moco or molybdenum cofactor) to form Mo-molybdopterin guanine dinucleotide (Mo-MGD) cofactor. The chain is Molybdenum cofactor guanylyltransferase from Pseudomonas putida (Arthrobacter siderocapsulatus).